Consider the following 131-residue polypeptide: Large ribosomal subunit protein bL12 (131 aa).

Belongs to the bacterial ribosomal protein bL12 family. Homodimer. Part of the ribosomal stalk of the 50S ribosomal subunit. Forms a multimeric L10(L12)X complex, where L10 forms an elongated spine to which 2 to 4 L12 dimers bind in a sequential fashion. Binds GTP-bound translation factors.

Forms part of the ribosomal stalk which helps the ribosome interact with GTP-bound translation factors. Is thus essential for accurate translation. This chain is Large ribosomal subunit protein bL12, found in Prochlorococcus marinus (strain MIT 9312).